The primary structure comprises 95 residues: Large ribosomal subunit protein uL23c (95 aa).

Belongs to the universal ribosomal protein uL23 family. In terms of assembly, part of the 50S ribosomal subunit.

Its subcellular location is the plastid. The protein localises to the chloroplast. Binds to 23S rRNA. The protein is Large ribosomal subunit protein uL23c (rpl23) of Guillardia theta (Cryptophyte).